The sequence spans 123 residues: MELARPRSNFQSDLDFCPDCGSVLPLPGIQDTVICSRCGFSIDVRDCEGKVVKTSVVFNKLGATIPLSVDEGPELQGPVIDRRCPRCGHEGMAYHTRQMRSADEGQTVFYTCINCKFQEKEDS.

The Zn(2+) site is built by C17, C20, C35, C38, C84, and C87. The C4-type zinc-finger motif lies at 17–38 (CPDCGSVLPLPGIQDTVICSRC). The segment at 80-120 (IDRRCPRCGHEGMAYHTRQMRSADEGQTVFYTCINCKFQEK) adopts a TFIIS-type zinc-finger fold. A Hairpin motif is present at residues 103–104 (DE). The Zn(2+) site is built by C112 and C115.

It belongs to the archaeal RpoM/eukaryotic RPA12/RPB9/RPC11 RNA polymerase family. Component of the RNA polymerase I (Pol I) complex consisting of 13 subunits: a ten-subunit catalytic core composed of POLR1A/RPA1, POLR1B/RPA2, POLR1C/RPAC1, POLR1D/RPAC2, POLR1H/RPA12, POLR2E/RPABC1, POLR2F/RPABC2, POLR2H/RPABC3, POLR2K/RPABC4 and POLR2L/RPABC5; a mobile stalk subunit POLR1F/RPA43 protruding from the core and additional subunits homologous to general transcription factors POLR1E/RPA49 and POLR1G/RPA34. Part of Pol I pre-initiation complex (PIC), in which Pol I core assembles with RRN3 and promoter-bound UTBF and SL1/TIF-IB complex.

The protein resides in the nucleus. Its subcellular location is the nucleolus. Core component of RNA polymerase I (Pol I), a DNA-dependent RNA polymerase which synthesizes ribosomal RNA precursors using the four ribonucleoside triphosphates as substrates. Can mediate Pol I proofreading of the nascent RNA transcript. Anchors into the Pol I active site to monitor transcription fidelity and cleave mis-incorporated 5'-ribonucleotides. The chain is DNA-directed RNA polymerase I subunit RPA12 from Mus musculus (Mouse).